Here is a 118-residue protein sequence, read N- to C-terminus: M-zodatoxin-Lt8p (118 aa).

Positions 1–3 (AES) are cleaved as a signal peptide. The propeptide occupies 4 to 43 (KPAESEHELAEVEEENELADLEDAVWLEHLADLSDLEEAR).

This sequence belongs to the cationic peptide 06 (cytoinsectotoxin) family. In terms of tissue distribution, expressed by the venom gland.

The protein resides in the secreted. In terms of biological role, insecticidal, cytolytic and antimicrobial peptide. Forms voltage-dependent, ion-permeable channels in membranes. At high concentration causes cell membrane lysis. The chain is M-zodatoxin-Lt8p (cit 1-15) from Lachesana tarabaevi (Spider).